Consider the following 379-residue polypeptide: Sulfate adenylyltransferase (379 aa).

It belongs to the sulfate adenylyltransferase family.

The enzyme catalyses sulfate + ATP + H(+) = adenosine 5'-phosphosulfate + diphosphate. The protein operates within sulfur metabolism; hydrogen sulfide biosynthesis; sulfite from sulfate: step 1/3. This chain is Sulfate adenylyltransferase (sat), found in Pyrococcus abyssi (strain GE5 / Orsay).